A 363-amino-acid chain; its full sequence is Histidine biosynthesis bifunctional protein HisB (363 aa).

Residues 1 to 174 are histidinol-phosphatase; sequence MTQPTLFIDR…AVTNIGDRQP (174 aa). Aspartate 9 serves as the catalytic Nucleophile. Positions 9 and 11 each coordinate Mg(2+). The active-site Proton donor is the aspartate 11. Zn(2+)-binding residues include cysteine 92, histidine 94, cysteine 100, and cysteine 102. A Mg(2+)-binding site is contributed by aspartate 129. The tract at residues 175 to 363 is imidazoleglycerol-phosphate dehydratase; the sequence is RYAEVVRKTK…NELPSSKGVL (189 aa).

This sequence in the N-terminal section; belongs to the histidinol-phosphatase family. The protein in the C-terminal section; belongs to the imidazoleglycerol-phosphate dehydratase family. Mg(2+) serves as cofactor. It depends on Zn(2+) as a cofactor.

It localises to the cytoplasm. The enzyme catalyses D-erythro-1-(imidazol-4-yl)glycerol 3-phosphate = 3-(imidazol-4-yl)-2-oxopropyl phosphate + H2O. It carries out the reaction L-histidinol phosphate + H2O = L-histidinol + phosphate. The protein operates within amino-acid biosynthesis; L-histidine biosynthesis; L-histidine from 5-phospho-alpha-D-ribose 1-diphosphate: step 6/9. It functions in the pathway amino-acid biosynthesis; L-histidine biosynthesis; L-histidine from 5-phospho-alpha-D-ribose 1-diphosphate: step 8/9. The chain is Histidine biosynthesis bifunctional protein HisB from Actinobacillus pleuropneumoniae serotype 5b (strain L20).